The chain runs to 180 residues: CASP-like protein 2A3 (180 aa).

The Cytoplasmic segment spans residues 1-13 (MELIYGSTMRKKW). A helical transmembrane segment spans residues 14 to 34 (IEPALRFLPVGLCISALALML). Residues 35-55 (KSKEGNENGILEYKHVGAFRY) are Extracellular-facing. The chain crosses the membrane as a helical span at residues 56–76 (LAYANGICAAYSVLSTFNSVV). Residues 77 to 85 (PRSCSLSRA) are Cytoplasmic-facing. A helical transmembrane segment spans residues 86–106 (WFVFVFDQAFTYLMLGAGAVV). Over 107–135 (TEVLYLAYKGDEKITWFEICPYYGRFCNR) the chain is Extracellular. Residues 136–156 (VAASLVISFLALLCFIPLSLI) traverse the membrane as a helical segment. At 157 to 180 (SAYRVFSKYDPPSLCKKDQITSQS) the chain is on the cytoplasmic side.

Belongs to the Casparian strip membrane proteins (CASP) family. As to quaternary structure, homodimer and heterodimers.

It is found in the cell membrane. This chain is CASP-like protein 2A3, found in Picea sitchensis (Sitka spruce).